The sequence spans 456 residues: MEKKTDEVFDALFKLEEIRQILRDSLPTGLDNDEKEAWKSKLSELNEIVQKLDSESVTRPLKKIAGTIEIRSREENYINIQPIQAAGRLTLEARKAIIAYGDGYSTCDTCRKPFRLDKISKPPIGDFHTELARFVNMDQARVVPGARRGFQAVAQTMVQRGDSVIVSSFAHYTEFLAVEGAGGQVREVPVDKNNLITADATATKIEDVIRETGKNPALVMMDHIDYQVANEHDVTGIAKVAHQYDIPFLYNGAYTVGIMPVDGKAIGADFVVGSGHKSMASPAPSGMLATTDEWAPKVLRTTQMVGDLTSRKFGVKEVEMLGCTLMGSNLIAMMASFPEVQKRTQNWDDEVKKSNYFIDALLTIEGSRVLSEYPRKHALSKVDTTGSFDIVAKTHKRKGFYFSDELSARGIVGEFAGATRTWKLSTYGLSWKKVQYLADAFTEIAEKYELPLKSKT.

Residues A146–R147, N251, and S274–H276 each bind pyridoxal 5'-phosphate. N6-(pyridoxal phosphate)lysine is present on K277.

Belongs to the SepCysS family. As to quaternary structure, homodimer. Interacts with SepRS. The cofactor is pyridoxal 5'-phosphate.

It catalyses the reaction O-phospho-L-seryl-tRNA(Cys) + hydrogen sulfide + H(+) = L-cysteinyl-tRNA(Cys) + phosphate. Its function is as follows. Converts O-phospho-L-seryl-tRNA(Cys) (Sep-tRNA(Cys)) to L-cysteinyl-tRNA(Cys) (Cys-tRNA(Cys)). The polypeptide is O-phospho-L-seryl-tRNA:Cys-tRNA synthase 2 (Methanospirillum hungatei JF-1 (strain ATCC 27890 / DSM 864 / NBRC 100397 / JF-1)).